We begin with the raw amino-acid sequence, 210 residues long: Pyridoxine/pyridoxamine 5'-phosphate oxidase (210 aa).

Substrate contacts are provided by residues Arg7–Tyr10 and Lys65. FMN is bound by residues Arg60–Lys65, Tyr75–Thr76, Arg81, Lys82, and Gln104. Substrate-binding residues include Tyr122, Arg126, and Ser130. Residues Gln139 to Ser140 and Trp182 each bind FMN. Arg188–His190 is a binding site for substrate. An FMN-binding site is contributed by Arg192.

This sequence belongs to the pyridoxamine 5'-phosphate oxidase family. As to quaternary structure, homodimer. FMN serves as cofactor.

The enzyme catalyses pyridoxamine 5'-phosphate + O2 + H2O = pyridoxal 5'-phosphate + H2O2 + NH4(+). The catalysed reaction is pyridoxine 5'-phosphate + O2 = pyridoxal 5'-phosphate + H2O2. It functions in the pathway cofactor metabolism; pyridoxal 5'-phosphate salvage; pyridoxal 5'-phosphate from pyridoxamine 5'-phosphate: step 1/1. It participates in cofactor metabolism; pyridoxal 5'-phosphate salvage; pyridoxal 5'-phosphate from pyridoxine 5'-phosphate: step 1/1. In terms of biological role, catalyzes the oxidation of either pyridoxine 5'-phosphate (PNP) or pyridoxamine 5'-phosphate (PMP) into pyridoxal 5'-phosphate (PLP). The protein is Pyridoxine/pyridoxamine 5'-phosphate oxidase of Bordetella petrii (strain ATCC BAA-461 / DSM 12804 / CCUG 43448).